A 1083-amino-acid chain; its full sequence is Neisserial autotransporter lipoprotein NalP (1083 aa).

A signal peptide spans 1 to 27 (MRTTPTFPTKTFKPTAMALAVATTLSA). A lipid anchor (N-palmitoyl cysteine) is attached at C28. C28 is lipidated: S-diacylglycerol cysteine. The Peptidase S8 domain maps to 111-483 (NDAYKNLINL…WGLLDAGKAM (373 aa)). Active-site charge relay system residues include D139, H211, and S427. An Autotransporter domain is found at 809-1083 (DGLDHNGTGL…SGRVGVGYRF (275 aa)). 12 beta stranded membrane passes run 819–828 (RVIAQTQQDG), 844–852 (TQTVGIAAK), 858–866 (TAAATLGMG), 883–891 (SLFAGIRHD), 897–906 (YLKGLFSYGR), 931–941 (QLGALGGVNVP), 948–958 (LTVEGGLRYDL), 984–994 (VGLAGLKLSQP), 1000–1010 (VLFATAGVERD), 1041–1052 (RLVAGLGADVEF), 1057–1066 (NGLARYSYAG), and 1074–1083 (SGRVGVGYRF).

The protein belongs to the peptidase S8 family. Post-translationally, a fusion protein of the first 44 residues with beta-lactamase is lipidated in E.coli, strongly suggesting this is a lipoprotein in situ. The lipidated form is briefly retained on the cell surface which allows it to process its endogenous substrates on the cell surface before the passenger domain is released into the medium.

It is found in the cell outer membrane. It localises to the cell surface. The protein localises to the secreted. Its function is as follows. Major human immunogenic protein. Autotransporter with a secreted protease domain involved in processing other autotransporter proteins including App and IgA. Probably autoprocesses to release the about 70 kDa passenger domain. Processes the lactoferrin receptor lipoprotein subunit (LbpB) extracellularly, releasing it from the cell surface. LbpB release protects bacteria against complement-mediated killing by anti-LbpB antibodies. Processes NHBA. Lipidation slows its auto-processing, probably allowing it to act on endogenous substrates on the cell surface before the passenger domain is released into the medium. The C-terminal beta-barrel domain inserts into the outer membrane where it probably exports the N-terminal passenger domain. Both the cell surface protein (Neisserial autotransporter lipoprotein NalP) and the passenger domain cleave human (host) complement factor C3, generating a shorter alpha chain and a longer beta chain than normal. Functionally, plays a role in extracellular-DNA (eDNA) mediated biofilm formation. In some strains (including cc32 strain H44/76 but not cc11 strain B16B6) eDNA stimulates biofilm formation. When NalP is not expressed (and no longer processes NHBA or IgA) biofilm formation increases. This is probably because the number of positively charged, DNA-binding peptides on the cell surface rises, resulting in increased biofilm formation. In terms of biological role, cleaves human (host) complement factor C3, generating a shorter alpha chain and a longer beta chain than normal. Does not act on mouse or rabbit C3. Cleavage causes C3b degradation by human CFI and CFH, decreases deposition of C3b on the bacteria surface and probably facilitates complement escape. The chain is Neisserial autotransporter lipoprotein NalP from Neisseria meningitidis serogroup B / serotype 15 (strain H44/76).